The following is a 197-amino-acid chain: Imidazoleglycerol-phosphate dehydratase (197 aa).

The protein belongs to the imidazoleglycerol-phosphate dehydratase family.

It is found in the cytoplasm. It catalyses the reaction D-erythro-1-(imidazol-4-yl)glycerol 3-phosphate = 3-(imidazol-4-yl)-2-oxopropyl phosphate + H2O. The protein operates within amino-acid biosynthesis; L-histidine biosynthesis; L-histidine from 5-phospho-alpha-D-ribose 1-diphosphate: step 6/9. This is Imidazoleglycerol-phosphate dehydratase from Methanocaldococcus jannaschii (strain ATCC 43067 / DSM 2661 / JAL-1 / JCM 10045 / NBRC 100440) (Methanococcus jannaschii).